We begin with the raw amino-acid sequence, 246 residues long: 3-deoxy-manno-octulosonate cytidylyltransferase (246 aa).

It belongs to the KdsB family.

Its subcellular location is the cytoplasm. It carries out the reaction 3-deoxy-alpha-D-manno-oct-2-ulosonate + CTP = CMP-3-deoxy-beta-D-manno-octulosonate + diphosphate. It functions in the pathway nucleotide-sugar biosynthesis; CMP-3-deoxy-D-manno-octulosonate biosynthesis; CMP-3-deoxy-D-manno-octulosonate from 3-deoxy-D-manno-octulosonate and CTP: step 1/1. It participates in bacterial outer membrane biogenesis; lipopolysaccharide biosynthesis. Activates KDO (a required 8-carbon sugar) for incorporation into bacterial lipopolysaccharide in Gram-negative bacteria. The sequence is that of 3-deoxy-manno-octulosonate cytidylyltransferase from Rickettsia felis (strain ATCC VR-1525 / URRWXCal2) (Rickettsia azadi).